Here is a 467-residue protein sequence, read N- to C-terminus: Neutrophil collagenase (467 aa).

A signal peptide spans 1–20 (MFSLKTLPFLLLLHVQISKA). Residues 21–100 (FPVSSKEKNT…CGVPDSGGFM (80 aa)) constitute a propeptide, activation peptide. N-linked (GlcNAc...) asparagine glycosylation is found at asparagine 54 and asparagine 73. A Cysteine switch motif is present at residues 89–96 (PRCGVPDS). A Zn(2+)-binding site is contributed by cysteine 91. N-linked (GlcNAc...) asparagine glycosylation occurs at asparagine 112. Aspartate 157 is a binding site for Ca(2+). Residues histidine 167 and aspartate 169 each coordinate Zn(2+). Ca(2+) is bound by residues aspartate 174, glycine 175, asparagine 177, and isoleucine 179. Histidine 182 contacts Zn(2+). Ca(2+) is bound by residues glycine 189, glycine 191, and aspartate 193. Zn(2+) is bound at residue histidine 195. The Ca(2+) site is built by aspartate 197 and glutamate 200. Residue asparagine 204 is glycosylated (N-linked (GlcNAc...) asparagine). Zn(2+) is bound at residue histidine 217. Residue glutamate 218 is part of the active site. Zn(2+) contacts are provided by histidine 221 and histidine 227. N-linked (GlcNAc...) asparagine glycosylation occurs at asparagine 246. Hemopexin repeat units lie at residues 276–325 (PKPC…WPSL), 326–372 (PTGI…GFPS), 374–420 (VQAI…FPGI), and 421–464 (ESKV…WLNC). Cysteine 279 and cysteine 464 are oxidised to a cystine. Aspartate 286 contributes to the Ca(2+) binding site. Ca(2+)-binding residues include aspartate 378 and aspartate 425.

This sequence belongs to the peptidase M10A family. Ca(2+) serves as cofactor. Requires Zn(2+) as cofactor. Neutrophils.

Its subcellular location is the cytoplasmic granule. It localises to the secreted. The protein localises to the extracellular space. It is found in the extracellular matrix. It catalyses the reaction Cleavage of interstitial collagens in the triple helical domain. Unlike EC 3.4.24.7, this enzyme cleaves type III collagen more slowly than type I.. Cannot be activated without removal of the activation peptide. Its function is as follows. Can degrade fibrillar type I, II, and III collagens. In Homo sapiens (Human), this protein is Neutrophil collagenase (MMP8).